The chain runs to 271 residues: Imidazole glycerol phosphate synthase subunit HisF (271 aa).

Active-site residues include D12 and D131.

Belongs to the HisA/HisF family. Heterodimer of HisH and HisF.

The protein resides in the cytoplasm. It catalyses the reaction 5-[(5-phospho-1-deoxy-D-ribulos-1-ylimino)methylamino]-1-(5-phospho-beta-D-ribosyl)imidazole-4-carboxamide + L-glutamine = D-erythro-1-(imidazol-4-yl)glycerol 3-phosphate + 5-amino-1-(5-phospho-beta-D-ribosyl)imidazole-4-carboxamide + L-glutamate + H(+). It functions in the pathway amino-acid biosynthesis; L-histidine biosynthesis; L-histidine from 5-phospho-alpha-D-ribose 1-diphosphate: step 5/9. Its function is as follows. IGPS catalyzes the conversion of PRFAR and glutamine to IGP, AICAR and glutamate. The HisF subunit catalyzes the cyclization activity that produces IGP and AICAR from PRFAR using the ammonia provided by the HisH subunit. This is Imidazole glycerol phosphate synthase subunit HisF from Methanospirillum hungatei JF-1 (strain ATCC 27890 / DSM 864 / NBRC 100397 / JF-1).